We begin with the raw amino-acid sequence, 345 residues long: MSFDYINALLKKPTSRTPIWIMRQAGRYLPEYRATRAKAGDFLTLCKSPELACEVTMQPIDRFDLDAAILFSDILTIPDAMGLGLYFMEGEGPKFRNPIKNLKDIKKISTDLNNDLSYVFDGVSTIKKSLNNRVPLIGFSGSPWTLATYMIEGGGRIFASTKKMLFNDPEALHLLLMKLTKSVIAYLNQQIVSGADSVMVFDTWGGVLSEQNYLDFSLYYMAKIVKGVKAQHPNIPITLFSKNGGKYLTHIANTGCDGVGIDWTVELYQVQQEVGNKVAIQGNLDPAVLYATPEVIEREVKKVLSQFKGDTGYIFNLGHGITPDVDPENVKILVDCVHTFSKECR.

Residues 23 to 27 (RQAGR), aspartate 73, tyrosine 149, threonine 203, and histidine 319 each bind substrate.

The protein belongs to the uroporphyrinogen decarboxylase family. In terms of assembly, homodimer.

The protein localises to the cytoplasm. The catalysed reaction is uroporphyrinogen III + 4 H(+) = coproporphyrinogen III + 4 CO2. It functions in the pathway porphyrin-containing compound metabolism; protoporphyrin-IX biosynthesis; coproporphyrinogen-III from 5-aminolevulinate: step 4/4. Catalyzes the decarboxylation of four acetate groups of uroporphyrinogen-III to yield coproporphyrinogen-III. The sequence is that of Uroporphyrinogen decarboxylase from Vesicomyosocius okutanii subsp. Calyptogena okutanii (strain HA).